Reading from the N-terminus, the 301-residue chain is Phomoidride biosynthesis cluster protein F (301 aa).

Functionally, part of the gene cluster that mediates the biosynthesis of the antihypercholesterolemic agents phomoidrides which are dimeric anhydrides. The function of phiF within the pathway has still to be determined. The pathway begins with the highly reducing polyketide synthase phiA that catalyzes the formation of a C12-fatty acyl-ACP, starting from one acetate and 5 malonate units. The hydrolase phiM is involved in the release of the C12-fatty acyl chain from phiA. The alkylcitrate synthase (ACS) phiJ and the alkylcitrate dehydratase (ACDH) phiI then give rise to decarboxylated monomeric anhydrides by coupling the C12-fatty acyl chain with oxalacetic acid. The cyclase phiC is responsible for the dimerization of the monomeric anhydrides which leads to the production of prephomoidride that contains the characteristic bicyclo[4.3.1]deca-1,6-diene system of phomoidrides. Iterative oxidation catalyzed by the alpha-ketoglutarate-dependent dioxygenase phiK produced then phomoidride A. Finally, the methyltransferase phiE converts phomoidride A to phomoidride B via an acetalization reaction. The phosphatidylethanolamine-binding protein phiB and phiN are not essential for dimerization and their functions have still to be determined. The chain is Phomoidride biosynthesis cluster protein F from Fungal sp. (strain ATCC 74256).